The primary structure comprises 208 residues: Protein-L-isoaspartate O-methyltransferase (208 aa).

Residue Ser59 is part of the active site.

It belongs to the methyltransferase superfamily. L-isoaspartyl/D-aspartyl protein methyltransferase family.

It is found in the cytoplasm. It carries out the reaction [protein]-L-isoaspartate + S-adenosyl-L-methionine = [protein]-L-isoaspartate alpha-methyl ester + S-adenosyl-L-homocysteine. Functionally, catalyzes the methyl esterification of L-isoaspartyl residues in peptides and proteins that result from spontaneous decomposition of normal L-aspartyl and L-asparaginyl residues. It plays a role in the repair and/or degradation of damaged proteins. The polypeptide is Protein-L-isoaspartate O-methyltransferase (Escherichia coli O1:K1 / APEC).